The chain runs to 242 residues: Neuromodulin (242 aa).

The disordered stretch occupies residues 1 to 242; it reads MLCCMRRTKQ…EEREADQEHA (242 aa). 2 S-palmitoyl cysteine lipidation sites follow: cysteine 3 and cysteine 4. Basic and acidic residues predominate over residues 9-32; that stretch reads KQVEKNDEDQKIEQDGIKPEDKAH. In terms of domain architecture, IQ spans 31–60; it reads AHKAATKIQASFRGHITRKKLKGEKKGDAP. Serine 41 carries the phosphoserine; by PHK and PKC modification. Residues 66 to 84 are compositionally biased toward basic and acidic residues; sequence ANEKDEAAVAEGTEKKEGE. Over residues 85–97 the composition is skewed to low complexity; that stretch reads GSTPAEAAPGAGP. Serine 86 is subject to Phosphoserine. Residues 98–118 show a composition bias toward basic and acidic residues; it reads KPEEKTGKAGETPSEEKKGEG. Over residues 119–134 the composition is skewed to low complexity; sequence APDAATEQAAPQAPAP. Residues 143–158 show a composition bias toward polar residues; the sequence is ETESATKASTDNSPSS. Phosphoserine occurs at positions 155, 157, and 158. Basic and acidic residues predominate over residues 159 to 171; it reads KAEDAPAKEEPKQ. Over residues 172 to 204 the composition is skewed to low complexity; the sequence is ADVPAAVTAAAATAPAAEDAAAMATAQPPTETA. Serine 206 and serine 207 each carry phosphoserine; by CK2. Over residues 209 to 242 the composition is skewed to basic and acidic residues; that stretch reads AEEKIEAVDETKPKDSARQDEGKGEEREADQEHA.

It belongs to the neuromodulin family. Identified in a complex containing FGFR4, NCAM1, CDH2, PLCG1, FRS2, SRC, SHC1, GAP43 and CTTN. Interacts (via IQ domain) with calmodulin. Binds calmodulin with a greater affinity in the absence of Ca(2+) than in its presence. In terms of processing, phosphorylated. Phosphorylation of this protein by a protein kinase C is specifically correlated with certain forms of synaptic plasticity. Post-translationally, palmitoylated by ZDHHC3. Palmitoylation is regulated by ARF6 and is essential for plasma membrane association and axonal and dendritic filopodia induction. Deacylated by LYPLA2.

The protein localises to the cell membrane. It is found in the cell projection. It localises to the growth cone membrane. The protein resides in the synapse. Its subcellular location is the filopodium membrane. The protein localises to the perikaryon. It is found in the dendrite. It localises to the axon. The protein resides in the cytoplasm. Functionally, this protein is associated with nerve growth. It is a major component of the motile 'growth cones' that form the tips of elongating axons. Plays a role in axonal and dendritic filopodia induction. This chain is Neuromodulin (GAP43), found in Bos taurus (Bovine).